The following is a 326-amino-acid chain: tRNA(Ile)-lysidine synthase (326 aa).

ATP is bound at residue 25 to 30; the sequence is SGGQDS.

The protein belongs to the tRNA(Ile)-lysidine synthase family.

It localises to the cytoplasm. The catalysed reaction is cytidine(34) in tRNA(Ile2) + L-lysine + ATP = lysidine(34) in tRNA(Ile2) + AMP + diphosphate + H(+). Functionally, ligates lysine onto the cytidine present at position 34 of the AUA codon-specific tRNA(Ile) that contains the anticodon CAU, in an ATP-dependent manner. Cytidine is converted to lysidine, thus changing the amino acid specificity of the tRNA from methionine to isoleucine. The sequence is that of tRNA(Ile)-lysidine synthase from Prochlorococcus marinus (strain NATL1A).